The chain runs to 80 residues: Putative defensin-like protein 23 (80 aa).

The N-terminal stretch at 1–25 is a signal peptide; sequence MTTTMKIMSFAMLLVLLFSIDVVEG. Intrachain disulfides connect cysteine 31-cysteine 80, cysteine 41-cysteine 66, cysteine 50-cysteine 76, and cysteine 54-cysteine 78.

It belongs to the DEFL family.

It is found in the secreted. This Arabidopsis thaliana (Mouse-ear cress) protein is Putative defensin-like protein 23.